The chain runs to 562 residues: Septation ring formation regulator EzrA (562 aa).

Residues 1-2 (ME) are Extracellular-facing. Residues 3 to 21 (FVIGLLIVLLALFAAGYFF) traverse the membrane as a helical segment. The Cytoplasmic segment spans residues 22–562 (RKKIYAEIDR…VEKIKADISA (541 aa)). Coiled coils occupy residues 377–425 (YSLL…LKKT) and 470–497 (MEEA…LVEQ).

Belongs to the EzrA family. May be degraded by FtsH protease.

The protein localises to the cell membrane. It is found in the membrane raft. Functionally, negative regulator of FtsZ ring formation; modulates the frequency and position of FtsZ ring formation. Inhibits FtsZ ring formation at polar sites. Interacts either with FtsZ or with one of its binding partners to promote depolymerization. The protein is Septation ring formation regulator EzrA of Bacillus subtilis (strain 168).